We begin with the raw amino-acid sequence, 475 residues long: Glutamate--tRNA ligase (475 aa).

The 'HIGH' region motif lies at 8 to 18; sequence PSPTGTLHIGT. The 'KMSKS' region motif lies at 247-251; that stretch reads KLSKR. Lysine 250 lines the ATP pocket.

Belongs to the class-I aminoacyl-tRNA synthetase family. Glutamate--tRNA ligase type 1 subfamily. In terms of assembly, monomer.

It localises to the cytoplasm. The catalysed reaction is tRNA(Glu) + L-glutamate + ATP = L-glutamyl-tRNA(Glu) + AMP + diphosphate. Its function is as follows. Catalyzes the attachment of glutamate to tRNA(Glu) in a two-step reaction: glutamate is first activated by ATP to form Glu-AMP and then transferred to the acceptor end of tRNA(Glu). The polypeptide is Glutamate--tRNA ligase (Synechococcus sp. (strain RCC307)).